The sequence spans 411 residues: Lissencephaly-1 homolog (411 aa).

A LisH domain is found at 9-41 (QREELNQAIADYLGSNGYGDSLETFRKEADVST). The stretch at 56–83 (TSVIRLQKKVMELEAKLTEAEKEVIEGA) forms a coiled coil. WD repeat units lie at residues 106-147 (GHRA…RSLK), 148-187 (GHTD…ECVK), 191-230 (GHDH…CVKT), 233-272 (GHRE…CKVE), 275-334 (DHEH…CLLT), 337-376 (GHDN…CMKT), and 379-411 (AHQH…WECR).

This sequence belongs to the WD repeat LIS1/nudF family.

Its subcellular location is the cytoplasm. It is found in the cytoskeleton. The protein localises to the microtubule organizing center. The protein resides in the centrosome. Positively regulates the activity of the minus-end directed microtubule motor protein dynein. May enhance dynein-mediated microtubule sliding by targeting dynein to the microtubule plus end. Required for several dynein- and microtubule-dependent processes. The sequence is that of Lissencephaly-1 homolog from Drosophila persimilis (Fruit fly).